A 376-amino-acid chain; its full sequence is Cyclin-dependent kinase 9-A (376 aa).

A Protein kinase domain is found at Tyr19 to Phe319. Residues Ile25–Val33 and Lys48 contribute to the ATP site. The Proton acceptor role is filled by Asp153. The segment at Pro345–Phe376 is disordered. Positions Pro354–Gln369 are enriched in low complexity.

The protein belongs to the protein kinase superfamily. CMGC Ser/Thr protein kinase family. CDC2/CDKX subfamily. Associates with cyclin-T to form P-TEFb.

It localises to the nucleus. It carries out the reaction L-seryl-[protein] + ATP = O-phospho-L-seryl-[protein] + ADP + H(+). The catalysed reaction is L-threonyl-[protein] + ATP = O-phospho-L-threonyl-[protein] + ADP + H(+). It catalyses the reaction [DNA-directed RNA polymerase] + ATP = phospho-[DNA-directed RNA polymerase] + ADP + H(+). In terms of biological role, member of the cyclin-dependent kinase pair (CDK9/cyclin-T) complex, also called positive transcription elongation factor B (P-TEFb), which is proposed to facilitate the transition from abortive to production elongation by phosphorylating the CTD (C-terminal domain) of the large subunit of RNA polymerase II (RNAP II) and SUPT5H. In Xenopus laevis (African clawed frog), this protein is Cyclin-dependent kinase 9-A (cdk9-a).